The following is a 452-amino-acid chain: Imaginal disk growth factor 6 (452 aa).

Positions 1–18 (MIIKALAIVSLCLASIQA) are cleaved as a signal peptide. The region spanning 29-452 (KHLVCYYDSA…LRAIKYRLTN (424 aa)) is the GH18 domain. A disulfide bridge connects residues Cys-33 and Cys-60. An N-linked (GlcNAc...) asparagine glycan is attached at Asn-233. A disulfide bridge connects residues Cys-352 and Cys-435.

The protein belongs to the glycosyl hydrolase 18 family. IDGF subfamily. Post-translationally, glycosylated. In terms of tissue distribution, in larvae, it is expressed in the fat body and by hemocytes.

The protein resides in the secreted. In terms of biological role, probably required to stimulate the proliferation, polarization and motility of imaginal disk cells. May act by stabilizing the binding of insulin-like peptides to its receptor through a simultaneous interaction with both molecules to form a multiprotein signaling complex. The chain is Imaginal disk growth factor 6 from Drosophila melanogaster (Fruit fly).